The chain runs to 277 residues: NH(3)-dependent NAD(+) synthetase (277 aa).

Position 36–43 (36–43 (GLSGGIDS)) interacts with ATP. D42 lines the Mg(2+) pocket. Residue R118 coordinates deamido-NAD(+). Residue T138 coordinates ATP. E143 lines the Mg(2+) pocket. The ATP site is built by K167 and S189.

It belongs to the NAD synthetase family. In terms of assembly, homodimer.

It catalyses the reaction deamido-NAD(+) + NH4(+) + ATP = AMP + diphosphate + NAD(+) + H(+). Its pathway is cofactor biosynthesis; NAD(+) biosynthesis; NAD(+) from deamido-NAD(+) (ammonia route): step 1/1. Functionally, catalyzes the ATP-dependent amidation of deamido-NAD to form NAD. Uses ammonia as a nitrogen source. This Chlorobium phaeobacteroides (strain BS1) protein is NH(3)-dependent NAD(+) synthetase.